Consider the following 56-residue polypeptide: Large ribosomal subunit protein bL32 (56 aa).

Residues 1–56 are disordered; it reads MAVPARRTSKAKKNKRRTHKGLTTPGLSRDSETGEYRMSHRISPDGTYKGRTIIEK. The segment covering 7–20 has biased composition (basic residues); the sequence is RTSKAKKNKRRTHK. The span at 29–38 shows a compositional bias: basic and acidic residues; it reads RDSETGEYRM.

The protein belongs to the bacterial ribosomal protein bL32 family.

The protein is Large ribosomal subunit protein bL32 of Listeria monocytogenes serotype 4a (strain HCC23).